The sequence spans 89 residues: Large ribosomal subunit protein bL27 (89 aa).

The interval 1–20 (MAHKKAGGSSRNGRDSAGQR) is disordered.

It belongs to the bacterial ribosomal protein bL27 family.

The polypeptide is Large ribosomal subunit protein bL27 (Paramagnetospirillum magneticum (strain ATCC 700264 / AMB-1) (Magnetospirillum magneticum)).